A 257-amino-acid chain; its full sequence is Putative hydro-lyase YcsI (257 aa).

It belongs to the D-glutamate cyclase family.

This is Putative hydro-lyase YcsI (ycsI) from Bacillus subtilis (strain 168).